We begin with the raw amino-acid sequence, 626 residues long: Basic helix-loop-helix ARNT-like protein 1 (626 aa).

Residues 1-60 are disordered; that stretch reads MADQRMDISSTISDFMSPGATDLLSSPLGTSGMDCNRKRKGSSTDYQESMDTDKDDPHGR. Phosphoserine; by GSK3-beta is present on S17. Phosphothreonine; by GSK3-beta is present on T21. The Nuclear localization signal motif lies at 36-41; the sequence is NRKRKG. Residues 51 to 60 are compositionally biased toward basic and acidic residues; the sequence is DTDKDDPHGR. The 54-residue stretch at 72–125 folds into the bHLH domain; that stretch reads NAREAHSQIEKRRRDKMNSFIDELASLVPTCNAMSRKLDKLTVLRMAVQHMKTL. S78 is subject to Phosphoserine. S90 carries the phosphoserine; by CK2 modification. The Nuclear export signal 1 signature appears at 142–152; the sequence is LSDDELKHLIL. The PAS 1 domain maps to 143-215; that stretch reads SDDELKHLIL…EQLSSSDTAP (73 aa). Residue K252 forms a Glycyl lysine isopeptide (Lys-Gly) (interchain with G-Cter in SUMO2 and SUMO3) linkage. K259 is covalently cross-linked (Glycyl lysine isopeptide (Lys-Gly) (interchain with G-Cter in SUMO); alternate). Residue K259 forms a Glycyl lysine isopeptide (Lys-Gly) (interchain with G-Cter in SUMO2); alternate linkage. One can recognise a PAS 2 domain in the interval 326–396; it reads PQPVNGEIRV…ECHRQVLQTR (71 aa). The Nuclear export signal 2 motif lies at 361–369; it reads LAYLPQELL. Residues 401-444 enclose the PAC domain; it reads TNCYKFKIKDGSFITLRSRWFSFMNPWTKEVEYIVSTNTVVLAN. 2 disordered regions span residues 457 to 493 and 510 to 597; these read TASP…AGAG and RGSS…SNDE. The span at 484–493 shows a compositional bias: gly residues; the sequence is IPGGTRAGAG. Residues 508 to 588 form an interaction with CIART region; it reads RIRGSSPSSC…IGIDMIDNDQ (81 aa). Residues 511–521 are compositionally biased toward low complexity; the sequence is GSSPSSCGSSP. K538 carries the N6-acetyllysine modification.

Component of the circadian clock oscillator which includes the CRY1/2 proteins, CLOCK or NPAS2, BMAL1 or BMAL2, CSNK1D and/or CSNK1E, TIMELESS and the PER1/2/3 proteins. Forms a heterodimer with CLOCK. The CLOCK-BMAL1 heterodimer is required for E-box-dependent transactivation, for CLOCK nuclear translocation and degradation, and, for phosphorylation of both CLOCK and BMAL1. Part of a nuclear complex which also includes RACK1 and PRKCA; RACK1 and PRKCA are recruited to the complex in a circadian manner. Interacts with NPAS2. Interacts with EZH2. Interacts with SUMO3. Interacts with SIRT1. Interacts with AHR. Interacts with ID1, ID2 and ID3. Interacts with DDX4. Interacts with OGT. Interacts with EED and SUZ12. Interacts with MTA1. Interacts with CIART. Interacts with HSP90. Interacts with KAT2B and EP300. Interacts with BHLHE40/DEC1 and BHLHE41/DEC2. Interacts with RELB and the interaction is enhanced in the presence of CLOCK. Interacts with PER1, PER2, CRY1 and CRY2 and this interaction requires a translocation to the nucleus. Interaction of the CLOCK-BMAL1 heterodimer with PER or CRY inhibits transcription activation. Interaction of the CLOCK-BMAL1 with CRY1 is independent of DNA but with PER2 is off DNA. The CLOCK-BMAL1 heterodimer interacts with GSK3B. Interacts with KDM5A. Interacts with KMT2A; in a circadian manner. Interacts with UBE3A. Interacts with PRKCG. Interacts with MAGEL2. Interacts with NCOA2. Interacts with THRAP3. The CLOCK-BMAL1 heterodimer interacts with PASD1. Interacts with PASD1. Interacts with USP9X. Interacts with PIWIL2 (via PIWI domain). Interacts with HDAC3. Interacts with HNF4A. Ubiquitinated, leading to its proteasomal degradation. Deubiquitinated by USP9X. Post-translationally, O-glycosylated; contains O-GlcNAc. O-glycosylation by OGT prevents protein degradation by inhibiting ubiquitination. It also stabilizes the CLOCK-BMAL1 heterodimer thereby increasing CLOCK-BMAL1-mediated transcription of genes in the negative loop of the circadian clock such as PER1/2/3 and CRY1/2. In terms of processing, acetylated on Lys-538 by CLOCK during the repression phase of the circadian cycle. Acetylation facilitates recruitment of CRY1 protein and initiates the repression phase of the circadian cycle. Acetylated at Lys-538 by KAT5 during the activation phase of the cycle, leading to recruitment of the positive transcription elongation factor b (P-TEFb) and BRD4, followed by productive elongation of circadian transcripts. Deacetylated by SIRT1, which may result in decreased protein stability. Phosphorylated upon dimerization with CLOCK. Phosphorylation enhances the transcriptional activity, alters the subcellular localization and decreases the stability of the CLOCK-BMAL1 heterodimer by promoting its degradation. Phosphorylation shows circadian variations in the liver with a peak between CT10 to CT14. Phosphorylation at Ser-90 by CK2 is essential for its nuclear localization, its interaction with CLOCK and controls CLOCK nuclear entry. Dephosphorylation at Ser-78 is important for dimerization with CLOCK and transcriptional activity. Post-translationally, sumoylated on Lys-259 upon dimerization with CLOCK. Predominantly conjugated to poly-SUMO2/3 rather than SUMO1 and the level of these conjugates undergo rhythmic variation, peaking at CT9-CT12. Sumoylation localizes it exclusively to the PML body and promotes its ubiquitination in the PML body, ubiquitin-dependent proteasomal degradation and the transcriptional activity of the CLOCK-BMAL1 heterodimer. In terms of processing, undergoes lysosome-mediated degradation in a time-dependent manner in the liver.

Its subcellular location is the nucleus. The protein localises to the cytoplasm. The protein resides in the PML body. In terms of biological role, transcriptional activator which forms a core component of the circadian clock. The circadian clock, an internal time-keeping system, regulates various physiological processes through the generation of approximately 24 hour circadian rhythms in gene expression, which are translated into rhythms in metabolism and behavior. It is derived from the Latin roots 'circa' (about) and 'diem' (day) and acts as an important regulator of a wide array of physiological functions including metabolism, sleep, body temperature, blood pressure, endocrine, immune, cardiovascular, and renal function. Consists of two major components: the central clock, residing in the suprachiasmatic nucleus (SCN) of the brain, and the peripheral clocks that are present in nearly every tissue and organ system. Both the central and peripheral clocks can be reset by environmental cues, also known as Zeitgebers (German for 'timegivers'). The predominant Zeitgeber for the central clock is light, which is sensed by retina and signals directly to the SCN. The central clock entrains the peripheral clocks through neuronal and hormonal signals, body temperature and feeding-related cues, aligning all clocks with the external light/dark cycle. Circadian rhythms allow an organism to achieve temporal homeostasis with its environment at the molecular level by regulating gene expression to create a peak of protein expression once every 24 hours to control when a particular physiological process is most active with respect to the solar day. Transcription and translation of core clock components (CLOCK, NPAS2, BMAL1, BMAL2, PER1, PER2, PER3, CRY1 and CRY2) plays a critical role in rhythm generation, whereas delays imposed by post-translational modifications (PTMs) are important for determining the period (tau) of the rhythms (tau refers to the period of a rhythm and is the length, in time, of one complete cycle). A diurnal rhythm is synchronized with the day/night cycle, while the ultradian and infradian rhythms have a period shorter and longer than 24 hours, respectively. Disruptions in the circadian rhythms contribute to the pathology of cardiovascular diseases, cancer, metabolic syndromes and aging. A transcription/translation feedback loop (TTFL) forms the core of the molecular circadian clock mechanism. Transcription factors, CLOCK or NPAS2 and BMAL1 or BMAL2, form the positive limb of the feedback loop, act in the form of a heterodimer and activate the transcription of core clock genes and clock-controlled genes (involved in key metabolic processes), harboring E-box elements (5'-CACGTG-3') within their promoters. The core clock genes: PER1/2/3 and CRY1/2 which are transcriptional repressors form the negative limb of the feedback loop and interact with the CLOCK|NPAS2-BMAL1|BMAL2 heterodimer inhibiting its activity and thereby negatively regulating their own expression. This heterodimer also activates nuclear receptors NR1D1, NR1D2, RORA, RORB and RORG, which form a second feedback loop and which activate and repress BMAL1 transcription, respectively. BMAL1 positively regulates myogenesis and negatively regulates adipogenesis via the transcriptional control of the genes of the canonical Wnt signaling pathway. Plays a role in normal pancreatic beta-cell function; regulates glucose-stimulated insulin secretion via the regulation of antioxidant genes NFE2L2/NRF2 and its targets SESN2, PRDX3, CCLC and CCLM. Negatively regulates the mTORC1 signaling pathway; regulates the expression of MTOR and DEPTOR. Controls diurnal oscillations of Ly6C inflammatory monocytes; rhythmic recruitment of the PRC2 complex imparts diurnal variation to chemokine expression that is necessary to sustain Ly6C monocyte rhythms. Regulates the expression of HSD3B2, STAR, PTGS2, CYP11A1, CYP19A1 and LHCGR in the ovary and also the genes involved in hair growth. Plays an important role in adult hippocampal neurogenesis by regulating the timely entry of neural stem/progenitor cells (NSPCs) into the cell cycle and the number of cell divisions that take place prior to cell-cycle exit. Regulates the circadian expression of CIART. The CLOCK-BMAL1 heterodimer regulates the circadian expression of SERPINE1/PAI1, VWF, B3, CCRN4L/NOC, NAMPT, DBP, MYOD1, PPARGC1A, PPARGC1B, SIRT1, GYS2, F7, NGFR, GNRHR, BHLHE40/DEC1, ATF4, MTA1 and also genes implicated in glucose and lipid metabolism. Promotes rhythmic chromatin opening, regulating the DNA accessibility of other transcription factors. The NPAS2-BMAL1 heterodimer positively regulates the expression of MAOA, F7 and LDHA and modulates the circadian rhythm of daytime contrast sensitivity by regulating the rhythmic expression of adenylate cyclase type 1 (ADCY1) in the retina. The preferred binding motif for the CLOCK-BMAL1 heterodimer is 5'-CACGTGA-3', which contains a flanking adenine nucleotide at the 3-prime end of the canonical 6-nucleotide E-box sequence. CLOCK specifically binds to the half-site 5'-CAC-3', while BMAL1 binds to the half-site 5'-GTGA-3'. The CLOCK-BMAL1 heterodimer also recognizes the non-canonical E-box motifs 5'-AACGTGA-3' and 5'-CATGTGA-3'. Essential for the rhythmic interaction of CLOCK with ASS1 and plays a critical role in positively regulating CLOCK-mediated acetylation of ASS1. Plays a role in protecting against lethal sepsis by limiting the expression of immune checkpoint protein CD274 in macrophages in a PKM2-dependent manner. Regulates the diurnal rhythms of skeletal muscle metabolism via transcriptional activation of genes promoting triglyceride synthesis (DGAT2) and metabolic efficiency (COQ10B). The chain is Basic helix-loop-helix ARNT-like protein 1 (BMAL1) from Equus caballus (Horse).